We begin with the raw amino-acid sequence, 45 residues long: MKVKASIKADPSKGDILVRRSGRLYVINKKDPNRKQRQKGPARKK.

The tract at residues 26–45 is disordered; the sequence is VINKKDPNRKQRQKGPARKK. Over residues 35-45 the composition is skewed to basic residues; sequence KQRQKGPARKK.

It belongs to the bacterial ribosomal protein bL36 family.

The chain is Large ribosomal subunit protein bL36 from Protochlamydia amoebophila (strain UWE25).